The sequence spans 447 residues: Argininosuccinate synthase (447 aa).

ATP contacts are provided by residues 12–20 (AYSGGLDTS) and alanine 39. L-citrulline is bound by residues tyrosine 92 and serine 97. Glycine 122 is an ATP binding site. L-aspartate contacts are provided by threonine 124, asparagine 128, and aspartate 129. Asparagine 128 is a binding site for L-citrulline. Positions 132, 182, 191, 267, and 279 each coordinate L-citrulline.

It belongs to the argininosuccinate synthase family. Type 1 subfamily. In terms of assembly, homotetramer.

The protein resides in the cytoplasm. The enzyme catalyses L-citrulline + L-aspartate + ATP = 2-(N(omega)-L-arginino)succinate + AMP + diphosphate + H(+). It participates in amino-acid biosynthesis; L-arginine biosynthesis; L-arginine from L-ornithine and carbamoyl phosphate: step 2/3. In Sulfurovum sp. (strain NBC37-1), this protein is Argininosuccinate synthase.